The chain runs to 426 residues: Methionine aminopeptidase 2 (426 aa).

The segment at 1–72 is disordered; it reads MTSATTTEAT…QEQTNPPTVG (72 aa). Positions 10 to 34 are enriched in basic and acidic residues; sequence TAKDLQEKLSLKENDVVEDDGKVEE. Positions 47 to 60 are enriched in basic residues; the sequence is KKKKKKKKSSKKKK. Substrate is bound at residue His179. Residues Asp199, Asp210, and His279 each contribute to the a divalent metal cation site. Substrate is bound at residue His287. A divalent metal cation-binding residues include Glu312 and Glu407.

Belongs to the peptidase M24A family. Methionine aminopeptidase eukaryotic type 2 subfamily. Requires Co(2+) as cofactor. Zn(2+) is required as a cofactor. Mn(2+) serves as cofactor. It depends on Fe(2+) as a cofactor.

The protein localises to the cytoplasm. The catalysed reaction is Release of N-terminal amino acids, preferentially methionine, from peptides and arylamides.. Functionally, cotranslationally removes the N-terminal methionine from nascent proteins. The N-terminal methionine is often cleaved when the second residue in the primary sequence is small and uncharged (Met-Ala-, Cys, Gly, Pro, Ser, Thr, or Val). The protein is Methionine aminopeptidase 2 (fma2) of Schizosaccharomyces pombe (strain 972 / ATCC 24843) (Fission yeast).